The sequence spans 600 residues: MNNQKYIRNFSIIAHIDHGKSTLADRLIEHCGGFQAREMSKQVLDSMDIEKERGITIKAQTVKLLYKAKDGNTYYLNLMDTPGHVDFAYEVSRSLAACEGSLLVVDSTQGVEAQTLANVYKAIENNHEIVPVLNKIDLPASEPEHVKQQIEDIIGIDASEALLISAKSGIGIDLVLEAIVNKLPPPKESSDDILKALLVDSWYDPYLGVVILVRIIDGALRKNMRIKMMATNSVYKVEHVGYFTPKKHIADVLYAGEIGFFTASIKQVADCKVGDTITDEKKPCEQALPGFKPNLPVVFCGFYPTDSSEFEYLKDSLAKLHLNDSSFEYEMESSSALGVGFRCGFLGLLHLEIIQERLSREFDLDLITTAPSVIYKIYMRDGESLEIYNPADLPNLQKIESIEEPWIKAIIIVPDEFLGAVLSLCTEKRGVQLDHSYIANRARIVYKLPLNEIVYDFYDRLKSCSKGYASFEWQMDVYAPSELVKLGILVNGKAVDALSTIVHRSRAEQTGRALCVRLKDLIPIQQIDIVIQASIGSRIIARETIKALRKDVLSKCYGGDITRKRKLLEKQKIGKKRMRQYGNIEIPQSAFIAALKIGDE.

One can recognise a tr-type G domain in the interval 5–187 (KYIRNFSIIA…AIVNKLPPPK (183 aa)). GTP is bound by residues 17–22 (DHGKST) and 134–137 (NKID).

The protein belongs to the TRAFAC class translation factor GTPase superfamily. Classic translation factor GTPase family. LepA subfamily.

It localises to the cell inner membrane. The enzyme catalyses GTP + H2O = GDP + phosphate + H(+). Required for accurate and efficient protein synthesis under certain stress conditions. May act as a fidelity factor of the translation reaction, by catalyzing a one-codon backward translocation of tRNAs on improperly translocated ribosomes. Back-translocation proceeds from a post-translocation (POST) complex to a pre-translocation (PRE) complex, thus giving elongation factor G a second chance to translocate the tRNAs correctly. Binds to ribosomes in a GTP-dependent manner. The sequence is that of Elongation factor 4 from Rickettsia canadensis (strain McKiel).